A 173-amino-acid polypeptide reads, in one-letter code: Mitochondrial import inner membrane translocase subunit TIM22-1 (173 aa).

The N-terminal 18 residues, 1–18 (MADSSAAEPTTGASSPPV), are a transit peptide targeting the mitochondrion. The tract at residues 1-26 (MADSSAAEPTTGASSPPVASDENSTQ) is disordered. 4 helical membrane passes run 52-72 (VTSG…LGAL), 101-119 (SCKT…ECIV), 128-144 (TVNT…SMSA), and 151-168 (ACIG…IEKF).

Belongs to the Tim17/Tim22/Tim23 family. Expressed in young cotyledons, roots, flowers and leaves.

Its subcellular location is the mitochondrion inner membrane. Its function is as follows. Essential core component of the TIM22 complex, a complex that mediates the import and insertion of multi-pass transmembrane proteins into the mitochondrial inner membrane. This chain is Mitochondrial import inner membrane translocase subunit TIM22-1 (TIM22-1), found in Arabidopsis thaliana (Mouse-ear cress).